The primary structure comprises 570 residues: Urease subunit alpha (570 aa).

The Urease domain occupies 131-570 (GGVDTHIHFI…LPMAQRYFLF (440 aa)). Ni(2+) is bound by residues His-136, His-138, and Lys-219. At Lys-219 the chain carries N6-carboxylysine. Position 221 (His-221) interacts with substrate. 2 residues coordinate Ni(2+): His-248 and His-274. His-322 serves as the catalytic Proton donor. Residue Asp-362 participates in Ni(2+) binding.

It belongs to the metallo-dependent hydrolases superfamily. Urease alpha subunit family. As to quaternary structure, heterotrimer of UreA (gamma), UreB (beta) and UreC (alpha) subunits. Three heterotrimers associate to form the active enzyme. The cofactor is Ni cation. Post-translationally, carboxylation allows a single lysine to coordinate two nickel ions.

The protein localises to the cytoplasm. It carries out the reaction urea + 2 H2O + H(+) = hydrogencarbonate + 2 NH4(+). The protein operates within nitrogen metabolism; urea degradation; CO(2) and NH(3) from urea (urease route): step 1/1. The polypeptide is Urease subunit alpha (Methylocella silvestris (strain DSM 15510 / CIP 108128 / LMG 27833 / NCIMB 13906 / BL2)).